We begin with the raw amino-acid sequence, 715 residues long: Probable phospholipase YOR022C, mitochondrial (715 aa).

The transit peptide at 1–22 (MLRFTHRGLPSSTRFRNIFVRL) directs the protein to the mitochondrion. Disordered regions lie at residues 161-180 (YPVD…NKDE), 242-268 (TSTS…SRSI), and 311-340 (YNNA…RQIR). A compositionally biased stretch (low complexity) spans 242–251 (TSTSFKAAKT). Residues 311–324 (YNNADNSQGANASS) show a composition bias toward polar residues. Ser-501 is an active-site residue. One can recognise a DDHD domain in the interval 519-700 (LEFQVDNLFF…AAFILKEILS (182 aa)).

The protein belongs to the PA-PLA1 family.

The protein localises to the mitochondrion. Its function is as follows. Probable phospholipase that hydrolyzes phosphatidic acid. The polypeptide is Probable phospholipase YOR022C, mitochondrial (Saccharomyces cerevisiae (strain ATCC 204508 / S288c) (Baker's yeast)).